We begin with the raw amino-acid sequence, 203 residues long: RNA chaperone ProQ (203 aa).

The disordered stretch occupies residues 111-138 (KAKRQALAPKKPAKKVAPKRAPAVKKER).

Belongs to the ProQ family.

Its subcellular location is the cytoplasm. Its function is as follows. RNA chaperone with significant RNA binding, RNA strand exchange and RNA duplexing activities. The sequence is that of RNA chaperone ProQ from Shewanella frigidimarina (strain NCIMB 400).